A 145-amino-acid polypeptide reads, in one-letter code: 3-hydroxyacyl-[acyl-carrier-protein] dehydratase FabZ (145 aa).

His-50 is an active-site residue.

It belongs to the thioester dehydratase family. FabZ subfamily.

It is found in the cytoplasm. It catalyses the reaction a (3R)-hydroxyacyl-[ACP] = a (2E)-enoyl-[ACP] + H2O. Its function is as follows. Involved in unsaturated fatty acids biosynthesis. Catalyzes the dehydration of short chain beta-hydroxyacyl-ACPs and long chain saturated and unsaturated beta-hydroxyacyl-ACPs. The sequence is that of 3-hydroxyacyl-[acyl-carrier-protein] dehydratase FabZ from Coxiella burnetii (strain CbuK_Q154) (Coxiella burnetii (strain Q154)).